A 437-amino-acid polypeptide reads, in one-letter code: MGALVAIVGRPNVGKSTLFNRLTQSRQAIVAEEAGTTRDRQYGRVHWNGREFSIVDTGGWVVNSEDVFEEEINKQVYIAVEEADVVLFVADNQTGVTSLDEQVAEILRRSKKPVIVVANKVDNTEDHYSASEFYSFGLGDPYCIAAVSGSGTGDLLDRVMELLPAENGQSDLDETLPRIAIVGRPNAGKSSLLNAFIGEDRHIVTDIAGTTRDSIYTKYNKFGLNFYLVDTAGIRKRGKVNEDLEYYSVIRSIRAIENSDVCVLMLDATRGVESQDLNIFQIIQRNSKGLVVCINKWDLVEDKSQAVIKTFENAIRQRFAPFTDFPLLFISAMTKQRIFKVLETVNQVYAHRSTRIPTHKLNEVMLPIIEATPPPATKGKYIKIKYVMQLPTAVPSFAFFANLPQWVKEPYKRFLENQIRAHWDFCGTPINIFIREK.

2 EngA-type G domains span residues Ala-3–Asn-167 and Pro-177–Ser-353. Residues Gly-9–Ser-16, Asp-56–Trp-60, Asn-119–Asp-122, Gly-183–Ser-190, Asp-230–Ile-234, and Asn-295–Asp-298 contribute to the GTP site. The region spanning Thr-354–Lys-437 is the KH-like domain.

Belongs to the TRAFAC class TrmE-Era-EngA-EngB-Septin-like GTPase superfamily. EngA (Der) GTPase family. Associates with the 50S ribosomal subunit.

GTPase that plays an essential role in the late steps of ribosome biogenesis. This chain is GTPase Der, found in Porphyromonas gingivalis (strain ATCC BAA-308 / W83).